The primary structure comprises 483 residues: Regulatory protein ViaA (483 aa).

This sequence belongs to the ViaA family. In terms of assembly, homodimer. Interacts with RavA.

The protein localises to the cytoplasm. Its function is as follows. Component of the RavA-ViaA chaperone complex, which may act on the membrane to optimize the function of some of the respiratory chains. ViaA stimulates the ATPase activity of RavA. This Escherichia coli O127:H6 (strain E2348/69 / EPEC) protein is Regulatory protein ViaA.